The following is a 538-amino-acid chain: Xylosidase/arabinosidase 43B (538 aa).

Glutamate 367 serves as the catalytic Proton donor.

Belongs to the glycosyl hydrolase 43 family.

It catalyses the reaction Hydrolysis of (1-&gt;4)-beta-D-xylans, to remove successive D-xylose residues from the non-reducing termini.. It carries out the reaction Hydrolysis of terminal non-reducing alpha-L-arabinofuranoside residues in alpha-L-arabinosides.. Its activity is regulated as follows. Activity is inhibited by Ag(+), Li(+), Cu(2+), Cr(3+), Co(3+), Ni(2+), Mg(2+), Zn(2+), EDTA, SDS and beta-mercaptoethanol; but not by Mn(2+), Pb(2+), Ca(2+) and Fe(3+). Its function is as follows. Bifunctional beta-xylosidase/alpha-L-arabinosidases with a low level of xylanase activity. Is most active on 4-nitrophenyl beta-D-xylopyranoside (pNPX) (defined as 100%), moderate on p-nitrophenyl-alpha-L-arabinofuranoside (pNPA) (56.6%), and weak on beechwood xylan (5.7%) and birchwood xylan (2.7%). Is able to attack xylooligosacchardies with degrees of polymerisation of 2-5, releasing the amounts of reducing sugars in the order of xylopentose &gt; xylotetraose &gt; xylotriose &gt; xylobiose, i.e. the rate of xylose released from xylooligosacchardies increased with the chain length. No activity was detected in the presence of carboxymethyl cellulose-sodium (CMC-Na), sugar beet arabinan, AZCL-arabinan (debranched), 4-nitrophenyl a-D - galactopyranoside, 2-nitrophenyl beta-D-galactopyranoside, and 4-nitrophenyl alpha-D-glucopyranoside. The protein is Xylosidase/arabinosidase 43B of Humicola insolens (Soft-rot fungus).